A 206-amino-acid chain; its full sequence is Thiamine-phosphate synthase (206 aa).

4-amino-2-methyl-5-(diphosphooxymethyl)pyrimidine-binding positions include 35 to 39 and Asn67; that span reads QLRHK. 2 residues coordinate Mg(2+): Asp68 and Asp87. Ser106 contacts 4-amino-2-methyl-5-(diphosphooxymethyl)pyrimidine. 2-[(2R,5Z)-2-carboxy-4-methylthiazol-5(2H)-ylidene]ethyl phosphate is bound at residue 132–134; it reads TGS. Lys135 is a binding site for 4-amino-2-methyl-5-(diphosphooxymethyl)pyrimidine. Gly163 serves as a coordination point for 2-[(2R,5Z)-2-carboxy-4-methylthiazol-5(2H)-ylidene]ethyl phosphate.

It belongs to the thiamine-phosphate synthase family. Mg(2+) is required as a cofactor.

It catalyses the reaction 2-[(2R,5Z)-2-carboxy-4-methylthiazol-5(2H)-ylidene]ethyl phosphate + 4-amino-2-methyl-5-(diphosphooxymethyl)pyrimidine + 2 H(+) = thiamine phosphate + CO2 + diphosphate. The enzyme catalyses 2-(2-carboxy-4-methylthiazol-5-yl)ethyl phosphate + 4-amino-2-methyl-5-(diphosphooxymethyl)pyrimidine + 2 H(+) = thiamine phosphate + CO2 + diphosphate. The catalysed reaction is 4-methyl-5-(2-phosphooxyethyl)-thiazole + 4-amino-2-methyl-5-(diphosphooxymethyl)pyrimidine + H(+) = thiamine phosphate + diphosphate. It participates in cofactor biosynthesis; thiamine diphosphate biosynthesis; thiamine phosphate from 4-amino-2-methyl-5-diphosphomethylpyrimidine and 4-methyl-5-(2-phosphoethyl)-thiazole: step 1/1. In terms of biological role, condenses 4-methyl-5-(beta-hydroxyethyl)thiazole monophosphate (THZ-P) and 2-methyl-4-amino-5-hydroxymethyl pyrimidine pyrophosphate (HMP-PP) to form thiamine monophosphate (TMP). In Chlorobium phaeobacteroides (strain DSM 266 / SMG 266 / 2430), this protein is Thiamine-phosphate synthase.